We begin with the raw amino-acid sequence, 503 residues long: Aromatase (503 aa).

Residues Asp309 and Met374 each contribute to the substrate site. Cys437 is a heme binding site.

The protein belongs to the cytochrome P450 family. Heme serves as cofactor.

The protein resides in the membrane. It carries out the reaction testosterone + 3 reduced [NADPH--hemoprotein reductase] + 3 O2 = 17beta-estradiol + formate + 3 oxidized [NADPH--hemoprotein reductase] + 4 H2O + 4 H(+). It catalyses the reaction androst-4-ene-3,17-dione + 3 reduced [NADPH--hemoprotein reductase] + 3 O2 = estrone + formate + 3 oxidized [NADPH--hemoprotein reductase] + 4 H2O + 4 H(+). Its function is as follows. Catalyzes the formation of aromatic C18 estrogens from C19 androgens. This Callithrix jacchus (White-tufted-ear marmoset) protein is Aromatase (CYP19A1).